The following is a 262-amino-acid chain: Carbonic anhydrase 13 (262 aa).

One can recognise an Alpha-carbonic anhydrase domain in the interval 4–261 (LSWGYREHNG…LKGRKVRASF (258 aa)). Residue H65 is the Proton donor/acceptor of the active site. Positions 95, 97, and 120 each coordinate Zn(2+). A substrate-binding site is contributed by 200-201 (TV).

Belongs to the alpha-carbonic anhydrase family. Zn(2+) is required as a cofactor. Expressed in thymus, small intestine, spleen, prostate, ovary, colon and testis.

It catalyses the reaction hydrogencarbonate + H(+) = CO2 + H2O. Its activity is regulated as follows. Inhibited by acetazolamide. Functionally, reversible hydration of carbon dioxide. The chain is Carbonic anhydrase 13 (CA13) from Homo sapiens (Human).